The following is a 362-amino-acid chain: Putative protein ARB2BP (362 aa).

The chain crosses the membrane as a helical span at residues 229-245; it reads IAFIVHGYGGLVFMDLL.

It belongs to the ARB2 family.

It localises to the membrane. The protein is Putative protein ARB2BP of Homo sapiens (Human).